A 22-amino-acid polypeptide reads, in one-letter code: Fuctinin-2 (22 aa).

Residues 1 to 22 form a disordered region; that stretch reads ELPGLPKGEKEQQEAIEHIDEV. Residues 7-22 show a composition bias toward basic and acidic residues; the sequence is KGEKEQQEAIEHIDEV.

It to human SET/PHAPII protein. Oligomer.

The protein resides in the cytoplasm. Its function is as follows. Has a role in the physiological regulation of fucosylation processes. This chain is Fuctinin-2, found in Rattus norvegicus (Rat).